The chain runs to 515 residues: Bifunctional purine biosynthesis protein PurH (515 aa).

In terms of domain architecture, MGS-like spans 1 to 145 (MTKRALISVS…KNHASVTVVV (145 aa)).

Belongs to the PurH family.

The enzyme catalyses (6R)-10-formyltetrahydrofolate + 5-amino-1-(5-phospho-beta-D-ribosyl)imidazole-4-carboxamide = 5-formamido-1-(5-phospho-D-ribosyl)imidazole-4-carboxamide + (6S)-5,6,7,8-tetrahydrofolate. The catalysed reaction is IMP + H2O = 5-formamido-1-(5-phospho-D-ribosyl)imidazole-4-carboxamide. The protein operates within purine metabolism; IMP biosynthesis via de novo pathway; 5-formamido-1-(5-phospho-D-ribosyl)imidazole-4-carboxamide from 5-amino-1-(5-phospho-D-ribosyl)imidazole-4-carboxamide (10-formyl THF route): step 1/1. Its pathway is purine metabolism; IMP biosynthesis via de novo pathway; IMP from 5-formamido-1-(5-phospho-D-ribosyl)imidazole-4-carboxamide: step 1/1. In Streptococcus pyogenes serotype M2 (strain MGAS10270), this protein is Bifunctional purine biosynthesis protein PurH.